Reading from the N-terminus, the 145-residue chain is Transcription antitermination protein NusB (145 aa).

It belongs to the NusB family.

Functionally, involved in transcription antitermination. Required for transcription of ribosomal RNA (rRNA) genes. Binds specifically to the boxA antiterminator sequence of the ribosomal RNA (rrn) operons. The protein is Transcription antitermination protein NusB of Acetivibrio thermocellus (strain ATCC 27405 / DSM 1237 / JCM 9322 / NBRC 103400 / NCIMB 10682 / NRRL B-4536 / VPI 7372) (Clostridium thermocellum).